Reading from the N-terminus, the 329-residue chain is Carrier protein YMC2, mitochondrial (329 aa).

Positions 1–27 (MSEEFPTPQLLDELEDQQKVTTPNEKR) are disordered. Residues 1–33 (MSEEFPTPQLLDELEDQQKVTTPNEKRELSSNR) constitute a mitochondrion transit peptide. Solcar repeat units follow at residues 34–115 (VLKD…MKRF), 143–226 (SQYY…LVAR), and 238–325 (PPWK…VMRF). The next 6 membrane-spanning stretches (helical) occupy residues 38–58 (IFAG…FDTT), 84–104 (VFAF…CVSV), 140–160 (LPLS…SFLA), 205–225 (TMIR…ALVA), 243–263 (CLFG…LDVV), and 297–318 (FFKG…TFLT).

This sequence belongs to the mitochondrial carrier (TC 2.A.29) family.

It localises to the mitochondrion inner membrane. This is Carrier protein YMC2, mitochondrial (YMC2) from Saccharomyces cerevisiae (strain ATCC 204508 / S288c) (Baker's yeast).